Reading from the N-terminus, the 191-residue chain is D-glycero-beta-D-manno-heptose-1,7-bisphosphate 7-phosphatase (191 aa).

Catalysis depends on aspartate 11, which acts as the Nucleophile. The Mg(2+) site is built by aspartate 11 and aspartate 13. Substrate is bound by residues 11 to 13, 19 to 22, and 53 to 56; these read DRD, DHGY, and TNQS. Residue aspartate 13 is the Proton donor of the active site. Zn(2+)-binding residues include cysteine 92, histidine 94, cysteine 107, and cysteine 109. Residue 110–111 participates in substrate binding; it reads RK. The Mg(2+) site is built by aspartate 136 and lysine 137. Residue lysine 137 participates in substrate binding.

It belongs to the GmhB family. As to quaternary structure, monomer. Requires Mg(2+) as cofactor. It depends on Zn(2+) as a cofactor.

The protein resides in the cytoplasm. The catalysed reaction is D-glycero-beta-D-manno-heptose 1,7-bisphosphate + H2O = D-glycero-beta-D-manno-heptose 1-phosphate + phosphate. It functions in the pathway nucleotide-sugar biosynthesis; ADP-L-glycero-beta-D-manno-heptose biosynthesis; ADP-L-glycero-beta-D-manno-heptose from D-glycero-beta-D-manno-heptose 7-phosphate: step 2/4. Its pathway is bacterial outer membrane biogenesis; LPS core biosynthesis. Its function is as follows. Converts the D-glycero-beta-D-manno-heptose 1,7-bisphosphate intermediate into D-glycero-beta-D-manno-heptose 1-phosphate by removing the phosphate group at the C-7 position. This Escherichia coli O157:H7 protein is D-glycero-beta-D-manno-heptose-1,7-bisphosphate 7-phosphatase (gmhB).